The sequence spans 260 residues: ProSAAS (260 aa).

The first 33 residues, 1–33 (MAGSPLLCGPRAGGVGLLVLLLLGLLRLPPTLS), serve as a signal peptide directing secretion. Residues 34–215 (ARPVKEPRSL…SSEPEAAPAP (182 aa)) are proSAAS(1-180). 2 disordered regions span residues 162-187 (AALRPRPPVYDDGPTGPDVEDAADET) and 206-234 (SSEPEAAPAPRRLRRAVDQDLGPEVPPEN). Positions 221 to 260 (AVDQDLGPEVPPENVLGALLRVKRLENSSPQAPARRLLPP) are C-terminal inhibitory domain; interacts with PCSK1. A Sufficient for inhibition of PCSK1 motif is present at residues 239-244 (LLRVKR).

As to quaternary structure, interacts via the C-terminal inhibitory domain with PCSK1 65 kDa form. Proteolytically cleaved in the Golgi. Big SAAS, Little SAAS, PEN and Big LEN are the major processed peptides in proSAAS-overexpressing PC-12 phaeochromocytoma cells (lacking PCSK1 and PCSK2 endopeptidases). Peptides corresponding to PEN and a proSAAS aa 40-59 have been detected in wild-type PC-12 cells. Expressed in adult brain (all major structural regions), adrenal gland (medulla) and spinal cord (dorsal and ventral horn). Expressed in pancreatic islands.

Its subcellular location is the secreted. It localises to the golgi apparatus. The protein resides in the trans-Golgi network. In terms of biological role, may function in the control of the neuroendocrine secretory pathway. Proposed be a specific endogenous inhibitor of PCSK1. ProSAAS and Big PEN-LEN, both containing the C-terminal inhibitory domain, but not the processed peptides reduce PCSK1 activity in the endoplasmic reticulum and Golgi. It reduces the activity of the 87 kDa form but not the autocatalytically derived 65 kDa form of PCSK1. Subsequent processing of proSAAS may eliminate the inhibition. Slows down convertase-mediated processing of proopiomelanocortin and proenkephalin. May control the intracellular timing of PCSK1 rather than its total level of activity. Its function is as follows. Endogenous ligand for GPR171. Neuropeptide involved in the regulation of feeding. This is ProSAAS (Pcsk1n) from Rattus norvegicus (Rat).